The chain runs to 152 residues: Natriuretic peptides A (152 aa).

The first 24 residues, 1 to 24, serve as a signal peptide directing secretion; sequence MGSSAITTSFLLFVAFQLPGQTGA. 2 propeptides span residues 25 to 122 and 92 to 102; these read NPVY…TAPR and EMGAPSDGDPG. Residues 50–108 are disordered; sequence MPLEDEAVPSQVLSEQNEEAGAPLSPLSEVPPWDGGRSTQPREMGAPSDGDPGNPPRSV. Residue Ser128 is modified to Phosphoserine. Cys129 and Cys145 are oxidised to a cystine. Residues 146 to 150 form an important for degradation of atrial natriuretic peptide by IDE region; it reads NSFRY.

This sequence belongs to the natriuretic peptide family. In terms of assembly, homodimer; disulfide-linked antiparallel dimer. The precursor molecule is proteolytically cleaved by CORIN at Arg-122 to produce the atrial natriuretic peptide. Undergoes further proteolytic cleavage by unknown proteases to give rise to long-acting natriuretic peptide, vessel dilator and kaliuretic peptide. Additional processing gives rise to the auriculin and atriopeptin peptides. In the kidneys, alternative processing by an unknown protease results in the peptide urodilatin. Post-translationally, cleavage by MME initiates degradation of the factor and thereby regulates its activity. Degradation by IDE results in reduced activation of NPR1 (in vitro). During IDE degradation, the resulting products can temporarily stimulate NPR2 to produce cGMP, before the fragments are completely degraded and inactivated by IDE (in vitro). In terms of processing, degraded by IDE. Phosphorylation on Ser-128 decreases vasorelaxant activity.

It localises to the secreted. The protein resides in the perikaryon. Its subcellular location is the cell projection. Hormone that plays a key role in mediating cardio-renal homeostasis, and is involved in vascular remodeling and regulating energy metabolism. Acts by specifically binding and stimulating NPR1 to produce cGMP, which in turn activates effector proteins, such as PRKG1, that drive various biological responses. Regulates vasodilation, natriuresis, diuresis and aldosterone synthesis and is therefore essential for regulating blood pressure, controlling the extracellular fluid volume and maintaining the fluid-electrolyte balance. Also involved in inhibiting cardiac remodeling and cardiac hypertrophy by inducing cardiomyocyte apoptosis and attenuating the growth of cardiomyocytes and fibroblasts. Plays a role in female pregnancy by promoting trophoblast invasion and spiral artery remodeling in uterus, and thus prevents pregnancy-induced hypertension. In adipose tissue, acts in various cGMP- and PKG-dependent pathways to regulate lipid metabolism and energy homeostasis. This includes up-regulating lipid metabolism and mitochondrial oxygen utilization by activating the AMP-activated protein kinase (AMPK), and increasing energy expenditure by acting via MAPK11 to promote the UCP1-dependent thermogenesis of brown adipose tissue. Binds the clearance receptor NPR3 which removes the hormone from circulation. In terms of biological role, may have a role in cardio-renal homeostasis through regulation of natriuresis, diuresis, vasodilation, and inhibiting aldosterone synthesis. In vitro, promotes the production of cGMP and induces vasodilation. May promote natriuresis, at least in part, by enhancing prostaglandin E2 synthesis resulting in the inhibition of renal Na+-K+-ATPase. However reports on the involvement of this peptide in mammal blood volume and blood pressure homeostasis are conflicting; according to a report, in vivo it is not sufficient to activate cGMP and does not inhibit collecting duct transport nor effect diuresis and natriuresis. Appears to bind to specific receptors that are distinct from the receptors bound by atrial natriuretic peptide and vessel dilator. Possibly enhances protein excretion in urine by decreasing proximal tubular protein reabsorption. Its function is as follows. May have a role in cardio-renal homeostasis through regulation of natriuresis, diuresis, and vasodilation. In vitro, promotes the production of cGMP and induces vasodilation. May promote natriuresis, at least in part, by enhancing prostaglandin E2 synthesis resulting in the inhibition of renal Na+-K+-ATPase. However reports on the involvement of this peptide in mammal blood volume and blood pressure homeostasis are conflicting; according to a report it is not sufficient to activate cGMP and does not inhibit collecting duct transport nor effect diuresis and natriuresis. Appears to bind to specific receptors that are distinct from the receptors bound by the atrial natriuretic and long-acting natriuretic peptides. Possibly functions in protein excretion in urine by maintaining the integrity of the proximal tubules and enhancing protein excretion by decreasing proximal tubular protein reabsorption. Functionally, may have a role in cardio-renal homeostasis through regulation of diuresis and inhibiting aldosterone synthesis. In vitro, promotes the production of cGMP and induces vasodilation. May promote natriuresis, at least in part, by enhancing prostaglandin E2 synthesis resulting in the inhibition of renal Na+-K+-ATPase. May have a role in potassium excretion but not sodium excretion (natriuresis). Possibly enhances protein excretion in urine by decreasing proximal tubular protein reabsorption. Hormone produced in the kidneys that appears to be important for maintaining cardio-renal homeostasis. Mediates vasodilation, natriuresis and diuresis primarily in the renal system, in order to maintain the extracellular fluid volume and control the fluid-electrolyte balance. Specifically binds and stimulates cGMP production by renal transmembrane receptors, likely NPR1. Urodilatin not ANP, may be the natriuretic peptide responsible for the regulation of sodium and water homeostasis in the kidney. In terms of biological role, may have a role in cardio-renal homeostasis through regulation of natriuresis and vasodilation. In vivo promotes natriuresis and in vitro, vasodilates renal artery strips. Its function is as follows. May have a role in cardio-renal homeostasis through regulation of regulation of natriuresis and vasodilation. In vivo promotes natriuresis. In vitro, vasodilates intestinal smooth muscle but not smooth muscle strips. Functionally, may have a role in cardio-renal homeostasis through regulation of natriuresis and vasodilation. In vivo promotes natriuresis. In vitro, selectively vasodilates intestinal and vascular smooth muscle strips. May have a role in cardio-renal homeostasis through regulation of natriuresis and vasodilation. In vivo promotes natriuresis. In vitro, selectively vasodilates intestinal smooth muscle but not vascular smooth muscle strips. This is Natriuretic peptides A (NPPA) from Ovis aries (Sheep).